Reading from the N-terminus, the 484-residue chain is Hemogen (484 aa).

Residues 1–25 show a composition bias toward basic and acidic residues; it reads MDLGKDQSHLKHHQTPDPHQEENHS. Disordered stretches follow at residues 1–32 and 44–91; these read MDLG…IGTW and KAEV…PQPQ. Residues 7–87 are necessary for nuclear localization; it reads QSHLKHHQTP…RQQNTELKVE (81 aa). The segment covering 61–79 has biased composition (basic residues); it reads KKRKQQRTGKGNRRGRKRQ. S123, S159, S181, S188, and S201 each carry phosphoserine. Residue T246 is modified to Phosphothreonine. 3 disordered regions span residues 265 to 290, 306 to 369, and 386 to 471; these read DVPK…TDQG, EPKD…YSPE, and QETS…ILNE. Residues 306–320 are compositionally biased toward basic and acidic residues; it reads EPKDLSTKTHQESAE. 2 positions are modified to phosphoserine: S349 and S353. T360 carries the phosphothreonine modification. 2 positions are modified to phosphoserine: S363 and S367. 3 stretches are compositionally biased toward basic and acidic residues: residues 413 to 428, 438 to 447, and 454 to 463; these read YKNK…EPHQ, PKAHQEDAKD, and EMKEKPKEEP.

Expressed in hematopoietic precursor cells, thyroid and spermatids (at protein level). Expressed in bone marrow, testis, thymus. Expressed in prostate cancer and ovarian cancer. Also expressed in thymus and thyroid tumors, non-Hodgkin lymphoma, various leukemia cell lines, peripheral blood mononuclear cells (PBMCs) and bone marrow mononuclear cells (BMMCs) of patients with leukemia.

The protein localises to the nucleus. Functionally, regulates the proliferation and differentiation of hematopoietic cells. Overexpression block the TPA-induced megakaryocytic differentiation in the K562 cell model. May also prevent cell apoptosis through the activation of the nuclear factor-kappa B (NF-kB). The polypeptide is Hemogen (HEMGN) (Homo sapiens (Human)).